The sequence spans 575 residues: Estrogen receptor beta (575 aa).

Residues 1-160 (MSSSLSPTLQ…GAVVKRDMHF (160 aa)) form a modulating region. The segment at 108-151 (DTKPHTSGRHSSFLSRPKLFGKRPEDGDGDEALDDDDPSSSSSG) is disordered. Over residues 134–145 (GDGDEALDDDDP) the composition is skewed to acidic residues. NR C4-type zinc fingers lie at residues 161 to 181 (CVVC…CEGC) and 197 to 221 (CPAT…LRKC). Residues 161-226 (CVVCHDYASG…RLRKCYEMGM (66 aa)) constitute a DNA-binding region (nuclear receptor). Residues 290–526 (SPEQLVYCIL…DLLLEMLDAN (237 aa)) enclose the NR LBD domain. Polar residues predominate over residues 537–549 (VCTDPVTPATSPN). The interval 537–557 (VCTDPVTPATSPNTPLPPQLH) is disordered.

Belongs to the nuclear hormone receptor family. NR3 subfamily. In terms of assembly, binds DNA as a homodimer. Can form a heterodimer with ER-alpha. In terms of tissue distribution, ovary and testis.

It localises to the nucleus. Binds estrogens with an affinity similar to that of ER-alpha, and activates expression of reporter genes containing estrogen response elements (ERE) in an estrogen-dependent manner. The polypeptide is Estrogen receptor beta (esr2) (Ictalurus punctatus (Channel catfish)).